The following is a 224-amino-acid chain: MSNPDTIIIDTGCANLSSVRYAFERIGADVEVSDDIDKIKAATRVVLPGVGTARAAMKALKDKKLIDTICSLTQPVLGVCLGMQMLTKASQERGGLSYGNSSKDCQCLGLIDTNIEQLDAKGLPLPHMGWNQISPSEHPLFAGVAEGSYVYFVHSYRAPLGDFTIAKCEYGEGFSAAIAKDNFMGVQFHPEKSAAVGATILRNFMKMNAGSFAGNHKSTQESAQ.

Residues 5 to 214 (DTIIIDTGCA…MKMNAGSFAG (210 aa)) enclose the Glutamine amidotransferase type-1 domain. The Nucleophile role is filled by Cys-80. Residues His-189 and Glu-191 contribute to the active site.

In terms of assembly, heterodimer of HisH and HisF.

It is found in the cytoplasm. It catalyses the reaction 5-[(5-phospho-1-deoxy-D-ribulos-1-ylimino)methylamino]-1-(5-phospho-beta-D-ribosyl)imidazole-4-carboxamide + L-glutamine = D-erythro-1-(imidazol-4-yl)glycerol 3-phosphate + 5-amino-1-(5-phospho-beta-D-ribosyl)imidazole-4-carboxamide + L-glutamate + H(+). The enzyme catalyses L-glutamine + H2O = L-glutamate + NH4(+). Its pathway is amino-acid biosynthesis; L-histidine biosynthesis; L-histidine from 5-phospho-alpha-D-ribose 1-diphosphate: step 5/9. IGPS catalyzes the conversion of PRFAR and glutamine to IGP, AICAR and glutamate. The HisH subunit catalyzes the hydrolysis of glutamine to glutamate and ammonia as part of the synthesis of IGP and AICAR. The resulting ammonia molecule is channeled to the active site of HisF. The sequence is that of Imidazole glycerol phosphate synthase subunit HisH from Shewanella loihica (strain ATCC BAA-1088 / PV-4).